The sequence spans 76 residues: MSKFFRRRKFCKFTAEGIKEIDYKDLNTLRQYLTENGRIVPSRVTGTKSKYQRQLTTAVKLARFLALIPYTDNHDI.

It belongs to the bacterial ribosomal protein bS18 family. As to quaternary structure, part of the 30S ribosomal subunit. Forms a tight heterodimer with protein bS6.

Functionally, binds as a heterodimer with protein bS6 to the central domain of the 16S rRNA, where it helps stabilize the platform of the 30S subunit. The protein is Small ribosomal subunit protein bS18 of Xylella fastidiosa (strain M23).